A 65-amino-acid polypeptide reads, in one-letter code: U15-hexatoxin-Mg1a (65 aa).

In terms of processing, contains 4 disulfide bonds. In terms of tissue distribution, expressed by the venom gland.

Its subcellular location is the secreted. Functionally, intrathorax injection into crickets causes paralysis prolonged for more than 60 minutes, followed by recovery. This chain is U15-hexatoxin-Mg1a, found in Macrothele gigas (Japanese funnel web spider).